A 353-amino-acid chain; its full sequence is MPLQNDRLLRALARQPVDRTPVWMMRQAGRYLPEYRETRGQAGSFMDLCRNAELACEVTMQPLRRYALDAAILFSDILTIPDAMDLGLYFETGEGPKFRKTVRSAEAVDALPVPDAERDLDYVMNAVRTIRHELADSVPLIGFSGSPWTLATYMIEGGSSKDFRHAKALMYGDPAAMHALLDKLARSVTDYLNAQIRAGAQIVQIFDTWGGVLSTPAYREFSLAYMARIVEGLIREHEGRHVPVILFTKQGGQWLETIADSGADAVGLDWTTELSDARARVGDRVALQGNLDPNVLFASPQAIRDEVARILASYGSGPGHVFNLGHGVSQFTDPDHVAAFIEALHELSPRYHG.

Substrate-binding positions include 26-30 (RQAGR), aspartate 76, tyrosine 153, threonine 208, and histidine 326.

Belongs to the uroporphyrinogen decarboxylase family. Homodimer.

It is found in the cytoplasm. It carries out the reaction uroporphyrinogen III + 4 H(+) = coproporphyrinogen III + 4 CO2. It functions in the pathway porphyrin-containing compound metabolism; protoporphyrin-IX biosynthesis; coproporphyrinogen-III from 5-aminolevulinate: step 4/4. Catalyzes the decarboxylation of four acetate groups of uroporphyrinogen-III to yield coproporphyrinogen-III. In Chromohalobacter salexigens (strain ATCC BAA-138 / DSM 3043 / CIP 106854 / NCIMB 13768 / 1H11), this protein is Uroporphyrinogen decarboxylase.